The chain runs to 218 residues: Dehydration-responsive element-binding protein 1B (218 aa).

A disordered region spans residues 1–26 (MEVEEAAYRTVWSEPPKRPAGRTKFR). A DNA-binding region (AP2/ERF) is located at residues 32–95 (VYRGVRRRGG…RGRAACLNFA (64 aa)). Positions 131–151 (SAAPSSPAETFADDGDEEEDN) are disordered. Residues 141–151 (FADDGDEEEDN) are compositionally biased toward acidic residues.

The protein belongs to the AP2/ERF transcription factor family. ERF subfamily.

The protein localises to the nucleus. Its function is as follows. Transcriptional activator that binds specifically to the DNA sequence 5'-[AG]CCGAC-3'. Binding to the C-repeat/DRE element mediates high salinity- and dehydration-inducible transcription. Confers resistance to high salt, cold and drought stress. This chain is Dehydration-responsive element-binding protein 1B (DREB1B), found in Oryza sativa subsp. indica (Rice).